The sequence spans 92 residues: Small ribosomal subunit protein uS19 (92 aa).

It belongs to the universal ribosomal protein uS19 family.

Protein S19 forms a complex with S13 that binds strongly to the 16S ribosomal RNA. This chain is Small ribosomal subunit protein uS19, found in Vibrio parahaemolyticus serotype O3:K6 (strain RIMD 2210633).